A 288-amino-acid chain; its full sequence is Beta-lactamase CARB-4 (288 aa).

Positions 1–17 (MKLLLVFSLLIPSMVFA) are cleaved as a signal peptide. S65 functions as the Acyl-ester intermediate in the catalytic mechanism. C72 and C118 are joined by a disulfide. 229 to 231 (RSG) is a substrate binding site.

Belongs to the class-A beta-lactamase family.

It catalyses the reaction a beta-lactam + H2O = a substituted beta-amino acid. Its activity is regulated as follows. Inhibited by clavulanic acid and sulbactam. In terms of biological role, hydrolyzes carbenicillin. Methicillin and oxacillin are weakly hydrolyzed. The chain is Beta-lactamase CARB-4 (carB4) from Pseudomonas aeruginosa.